Here is a 96-residue protein sequence, read N- to C-terminus: UPF0251 protein Ssed_3913 (96 aa).

This sequence belongs to the UPF0251 family.

The chain is UPF0251 protein Ssed_3913 from Shewanella sediminis (strain HAW-EB3).